The sequence spans 259 residues: Phosphate import ATP-binding protein PstB (259 aa).

One can recognise an ABC transporter domain in the interval 11–254 (AEARNLNFYY…PQDKRTEDYI (244 aa)). 43–50 (GPSGCGKS) lines the ATP pocket.

This sequence belongs to the ABC transporter superfamily. Phosphate importer (TC 3.A.1.7) family. In terms of assembly, the complex is composed of two ATP-binding proteins (PstB), two transmembrane proteins (PstC and PstA) and a solute-binding protein (PstS).

The protein localises to the cell inner membrane. It catalyses the reaction phosphate(out) + ATP + H2O = ADP + 2 phosphate(in) + H(+). Its function is as follows. Part of the ABC transporter complex PstSACB involved in phosphate import. Responsible for energy coupling to the transport system. The polypeptide is Phosphate import ATP-binding protein PstB (Dechloromonas aromatica (strain RCB)).